Consider the following 83-residue polypeptide: Sec-independent protein translocase protein TatA (83 aa).

A helical transmembrane segment spans residues 1–21; sequence MGSFSIWHWLIVLLIVVMVFG. The interval 44 to 83 is disordered; sequence KDGGQSAAATDDKPAAPAGQVTNAQASDKTTIDVEARQKS. Positions 63-72 are enriched in polar residues; it reads QVTNAQASDK. Basic and acidic residues predominate over residues 73-83; the sequence is TTIDVEARQKS.

It belongs to the TatA/E family. In terms of assembly, the Tat system comprises two distinct complexes: a TatABC complex, containing multiple copies of TatA, TatB and TatC subunits, and a separate TatA complex, containing only TatA subunits. Substrates initially bind to the TatABC complex, which probably triggers association of the separate TatA complex to form the active translocon.

It is found in the cell inner membrane. In terms of biological role, part of the twin-arginine translocation (Tat) system that transports large folded proteins containing a characteristic twin-arginine motif in their signal peptide across membranes. TatA could form the protein-conducting channel of the Tat system. This Polaromonas sp. (strain JS666 / ATCC BAA-500) protein is Sec-independent protein translocase protein TatA.